The sequence spans 449 residues: Exodeoxyribonuclease 7 large subunit (449 aa).

The protein belongs to the XseA family. In terms of assembly, heterooligomer composed of large and small subunits.

The protein localises to the cytoplasm. The catalysed reaction is Exonucleolytic cleavage in either 5'- to 3'- or 3'- to 5'-direction to yield nucleoside 5'-phosphates.. In terms of biological role, bidirectionally degrades single-stranded DNA into large acid-insoluble oligonucleotides, which are then degraded further into small acid-soluble oligonucleotides. In Salmonella heidelberg (strain SL476), this protein is Exodeoxyribonuclease 7 large subunit.